The following is a 79-amino-acid chain: Pigment-dispersing hormone type 1 (79 aa).

An N-terminal signal peptide occupies residues 1–22 (MRSAVVVALLVMVAMSLQLTAA). Ala76 carries the alanine amide modification.

The protein belongs to the arthropod PDH family. In terms of tissue distribution, eyestalk.

The protein localises to the secreted. Its function is as follows. The pigment-dispersing hormone causes the migration of the distal retinal pigment into the proximal end of the pigment chromatophore cells and thus decreases the amount of light entering the retinulas. May also function as a neurotransmitter and/or neuromodulator. In Penaeus vannamei (Whiteleg shrimp), this protein is Pigment-dispersing hormone type 1 (PDH1).